The sequence spans 490 residues: MASYGEEREIQKNYWKEHSVGLSVEAMMLDSKASDLDKEERPEILAFLPPIEGTTVLEFGAGIGRFTTELAQKAGQVIAVDFIESVIKKNENINGHYKNVKFLCADVTSPNMNFPNESMDLIFSNWLLMYLSDQEVEDLAKKMLQWTKVGGYIFFRESCFHQSGDNKRKYNPTHYREPKFYTKLFKECHMNDEDGNSYELSLVSCKCIGAYVRNKKNQNQICWLWQKVSSDNDRGFQRFLDNVQYKSSGILRYERVFGEGFVSTGGLETTKEFVDMLDLKPGQKVLDVGCGIGGGDFYMAENFDVDVVGIDLSVNMISFALEHAIGLKCSVEFEVADCTKKEYPDNTFDVIYSRDTILHIQDKPALFRRFYKWLKPGGKVLITDYCRSPKTPSPDFAIYIKKRGYDLHDVQAYGQMLRDAGFEEVIAEDRTDQFMKVLKRELDAVEKEKEEFISDFSKEDYEDIIGGWKSKLLRSSSGEQKWGLFIAKRN.

S-adenosyl-L-homocysteine-binding residues include Gly60, Arg65, Asp81, Asp106, Val107, and Asn125. Phosphocholine is bound by residues Ser158, Ser163, Gly164, Arg168, and Tyr175. N-methylethanolamine phosphate contacts are provided by residues 244 to 245 (QY) and Tyr253. Tyr253 is a phosphocholine binding site. Residues Val262, Ser263, Gly289, Asp311, Asp337, Cys338, and Arg354 each coordinate S-adenosyl-L-homocysteine. The phosphocholine site is built by Tyr385, Tyr399, Arg403, Tyr405, and Lys471. N-methylethanolamine phosphate-binding positions include Tyr385, Tyr399, 403–405 (RGY), and Lys471.

The protein belongs to the class I-like SAM-binding methyltransferase superfamily. PEAMT family. As to expression, expressed in root vasculature, shoots, rosettes leaves, cauline leaves, sepals, petals, anther filaments and ovules. Highly expressed in leaf vasculature.

It is found in the cytoplasm. The catalysed reaction is phosphoethanolamine + S-adenosyl-L-methionine = N-methylethanolamine phosphate + S-adenosyl-L-homocysteine + H(+). It carries out the reaction N-methylethanolamine phosphate + S-adenosyl-L-methionine = N,N-dimethylethanolamine phosphate + S-adenosyl-L-homocysteine + H(+). It catalyses the reaction N,N-dimethylethanolamine phosphate + S-adenosyl-L-methionine = phosphocholine + S-adenosyl-L-homocysteine + H(+). It participates in phospholipid metabolism; phosphatidylcholine biosynthesis; phosphocholine from phosphoethanolamine: step 1/1. Involved in phosphocholine biosynthesis. Catalyzes the N-methylation of phosphoethanolamine, phosphomonomethylethanolamine and phosphodimethylethanolamine, the three methylation steps required to convert phosphoethanolamine to phosphocholine (PC). In association with NMT1, regulates PC homeostasis, phase transition at the shoot apex, coordinated organ development, and fertility. In associtation with NMT1, involved in phosphatidylcholine biosynthesis and vascular development. This is Phosphoethanolamine N-methyltransferase 3 from Arabidopsis thaliana (Mouse-ear cress).